The sequence spans 401 residues: All trans-polyprenyl-diphosphate synthase PDSS2 (401 aa).

The protein belongs to the FPP/GGPP synthase family. As to quaternary structure, heterotetramer composed of 2 PDSS1/DPS1 and 2 PDSS2/DLP1 subunits.

It localises to the mitochondrion. The enzyme catalyses 7 isopentenyl diphosphate + (2E,6E)-farnesyl diphosphate = all-trans-decaprenyl diphosphate + 7 diphosphate. It carries out the reaction 6 isopentenyl diphosphate + (2E,6E)-farnesyl diphosphate = all-trans-nonaprenyl diphosphate + 6 diphosphate. It participates in cofactor biosynthesis; ubiquinone biosynthesis. Its function is as follows. Heterotetrameric enzyme that catalyzes the condensation of farnesyl diphosphate (FPP), which acts as a primer, and isopentenyl diphosphate (IPP) to produce prenyl diphosphates of varying chain lengths and participates in the determination of the side chain of ubiquinone. Supplies nona and decaprenyl diphosphate, the precursors for the side chain of the isoprenoid quinones ubiquinone-9 (Q9) and ubiquinone-10 (Q10) respectively. The enzyme adds isopentenyl diphosphate molecules sequentially to farnesyl diphosphate with trans stereochemistry. May play a role during cerebellar development. May regulate mitochondrial respiratory chain function. The chain is All trans-polyprenyl-diphosphate synthase PDSS2 from Mus musculus (Mouse).